A 73-amino-acid polypeptide reads, in one-letter code: Translation initiation factor IF-1 3 (73 aa).

The S1-like domain occupies 1–72 (MAKEELVEFG…TKGRINYRHK (72 aa)).

Belongs to the IF-1 family. In terms of assembly, component of the 30S ribosomal translation pre-initiation complex which assembles on the 30S ribosome in the order IF-2 and IF-3, IF-1 and N-formylmethionyl-tRNA(fMet); mRNA recruitment can occur at any time during PIC assembly.

Its subcellular location is the cytoplasm. In terms of biological role, one of the essential components for the initiation of protein synthesis. Stabilizes the binding of IF-2 and IF-3 on the 30S subunit to which N-formylmethionyl-tRNA(fMet) subsequently binds. Helps modulate mRNA selection, yielding the 30S pre-initiation complex (PIC). Upon addition of the 50S ribosomal subunit IF-1, IF-2 and IF-3 are released leaving the mature 70S translation initiation complex. The protein is Translation initiation factor IF-1 3 of Cupriavidus pinatubonensis (strain JMP 134 / LMG 1197) (Cupriavidus necator (strain JMP 134)).